Here is a 205-residue protein sequence, read N- to C-terminus: Dephospho-CoA kinase (205 aa).

The region spanning 5 to 201 is the DPCK domain; the sequence is VVGLTGGIGS…QRYLQLSGNH (197 aa). Residue 13-18 participates in ATP binding; the sequence is GSGKTT.

This sequence belongs to the CoaE family.

It localises to the cytoplasm. It carries out the reaction 3'-dephospho-CoA + ATP = ADP + CoA + H(+). It participates in cofactor biosynthesis; coenzyme A biosynthesis; CoA from (R)-pantothenate: step 5/5. In terms of biological role, catalyzes the phosphorylation of the 3'-hydroxyl group of dephosphocoenzyme A to form coenzyme A. This chain is Dephospho-CoA kinase, found in Shewanella oneidensis (strain ATCC 700550 / JCM 31522 / CIP 106686 / LMG 19005 / NCIMB 14063 / MR-1).